The chain runs to 126 residues: Large ribosomal subunit protein uL22 (126 aa).

It belongs to the universal ribosomal protein uL22 family. Part of the 50S ribosomal subunit.

This protein binds specifically to 23S rRNA; its binding is stimulated by other ribosomal proteins, e.g. L4, L17, and L20. It is important during the early stages of 50S assembly. It makes multiple contacts with different domains of the 23S rRNA in the assembled 50S subunit and ribosome. Its function is as follows. The globular domain of the protein is located near the polypeptide exit tunnel on the outside of the subunit, while an extended beta-hairpin is found that lines the wall of the exit tunnel in the center of the 70S ribosome. In Ruegeria sp. (strain TM1040) (Silicibacter sp.), this protein is Large ribosomal subunit protein uL22.